Here is a 233-residue protein sequence, read N- to C-terminus: Sugar fermentation stimulation protein homolog (233 aa).

It belongs to the SfsA family.

The protein is Sugar fermentation stimulation protein homolog of Saccharophagus degradans (strain 2-40 / ATCC 43961 / DSM 17024).